A 204-amino-acid chain; its full sequence is Matrix-remodeling-associated protein 7 (204 aa).

The chain crosses the membrane as a helical span at residues 7 to 27 (LLAALPALATALALLLAWLLV). Residues 32-148 (AASPEPARAP…FSFKYSPGKL (117 aa)) form a disordered region. Over residues 38 to 47 (ARAPPEPAPP) the composition is skewed to pro residues. The span at 63 to 103 (EPAASPAGPEEPGEPAGLGELGEPAGPGEPEGPGDPAAAPA) shows a compositional bias: low complexity. The span at 110–126 (VEARQEEEQDLDGEKGP) shows a compositional bias: basic and acidic residues. Residue S191 is modified to Phosphoserine.

Its subcellular location is the membrane. This is Matrix-remodeling-associated protein 7 (MXRA7) from Homo sapiens (Human).